The sequence spans 64 residues: Large ribosomal subunit protein bL35 (64 aa).

The interval 1–22 is disordered; it reads MPKAKTHSGASKRFRRTGTGKI.

The protein belongs to the bacterial ribosomal protein bL35 family.

This chain is Large ribosomal subunit protein bL35, found in Mycobacterium tuberculosis (strain ATCC 25177 / H37Ra).